The sequence spans 285 residues: Coagulation factor IX (285 aa).

Position 23 is a sulfotyrosine (tyrosine 23). Residue asparagine 25 is glycosylated (N-linked (GlcNAc...) asparagine). Threonine 27 bears the Phosphothreonine; alternate mark. Threonine 27 carries O-linked (GalNAc...) threonine; alternate glycosylation. Asparagine 45 is a glycosylation site (N-linked (GlcNAc...) asparagine). The O-linked (GalNAc...) threonine glycan is linked to threonine 47. The 227-residue stretch at 59–285 folds into the Peptidase S1 domain; the sequence is VVGGEDAKPG…YTKVSRYVNW (227 aa). A disulfide bridge links cysteine 84 with cysteine 100. The active-site Charge relay system is the histidine 99. Residues asparagine 115, glutamate 120, and glutamate 123 each coordinate Ca(2+). N-linked (GlcNAc...) asparagine glycans are attached at residues asparagine 127 and asparagine 138. Catalysis depends on aspartate 147, which acts as the Charge relay system. 2 cysteine pairs are disulfide-bonded: cysteine 214–cysteine 228 and cysteine 239–cysteine 267. Serine 243 serves as the catalytic Charge relay system.

The protein belongs to the peptidase S1 family. As to quaternary structure, heterodimer of a light chain and a heavy chain; disulfide-linked. Interacts (inactive and activated) with F11 (activated) in calcium-dependent manner. Interacts with SERPINC1. Post-translationally, activated by factor XIa, which excises the activation peptide. The propeptide can also be removed by snake venom protease. Activated by coagulation factor VIIa-tissue factor (F7-F3) complex in calcium-dependent manner.

It is found in the secreted. It carries out the reaction Selective cleavage of Arg-|-Ile bond in factor X to form factor Xa.. In terms of biological role, factor IX is a vitamin K-dependent plasma protein that participates in the intrinsic pathway of blood coagulation by converting factor X to its active form in the presence of Ca(2+) ions, phospholipids, and factor VIIIa. The protein is Coagulation factor IX (F9) of Cavia porcellus (Guinea pig).